We begin with the raw amino-acid sequence, 100 residues long: Conantokin-G (100 aa).

The first 21 residues, 1–21 (MHLYTYLYLLVPLVTFHLILG), serve as a signal peptide directing secretion. The propeptide occupies 22-80 (TGTLDDGGALTERRSADATALKAEPVLLQKSAARSTDDNGKDRLTQMKRILKQRGNKAR). Residues 52 to 100 (SAARSTDDNGKDRLTQMKRILKQRGNKARGEEELQENQELIREKSNGKR) form a disordered region. Residues 56–66 (STDDNGKDRLT) are compositionally biased toward basic and acidic residues. Residues 61-80 (GKDRLTQMKRILKQRGNKAR) form a gamma-carboxylation recognition sequence that plays a role in the conversion of Glu to carboxy-Glu (Gla) region. Glutamate 83 contributes to the a divalent metal cation binding site. 5 positions are modified to 4-carboxyglutamate: glutamate 83, glutamate 84, glutamate 87, glutamate 90, and glutamate 94. Glutamate 87, glutamate 90, and glutamate 94 together coordinate a divalent metal cation. A compositionally biased stretch (basic and acidic residues) spans 90 to 100 (ELIREKSNGKR). Asparagine amide is present on asparagine 97.

This sequence belongs to the conotoxin B superfamily. Requires Ca(2+) as cofactor. The cofactor is Mg(2+). As to expression, expressed by the venom duct.

Its subcellular location is the secreted. Conantokins inhibit N-methyl-D-aspartate (NMDA) receptors. This toxin is selective for the NR2B/GRIN2B subunit. Induces sleep-like symptoms in young mice and hyperactivity in older mice. The polypeptide is Conantokin-G (Conus geographus (Geography cone)).